We begin with the raw amino-acid sequence, 432 residues long: Glutamate--tRNA ligase 2 (432 aa).

Residues Pro6–Asn16 carry the 'HIGH' region motif. The 'KMSKS' region motif lies at Lys235–Arg239. Residue Lys238 coordinates ATP.

This sequence belongs to the class-I aminoacyl-tRNA synthetase family. Glutamate--tRNA ligase type 1 subfamily. Monomer.

It is found in the cytoplasm. The catalysed reaction is tRNA(Glu) + L-glutamate + ATP = L-glutamyl-tRNA(Glu) + AMP + diphosphate. Functionally, catalyzes the attachment of glutamate to tRNA(Glu) in a two-step reaction: glutamate is first activated by ATP to form Glu-AMP and then transferred to the acceptor end of tRNA(Glu). This is Glutamate--tRNA ligase 2 from Sulfurimonas denitrificans (strain ATCC 33889 / DSM 1251) (Thiomicrospira denitrificans (strain ATCC 33889 / DSM 1251)).